The following is a 116-amino-acid chain: G antigen 2B/2C (116 aa).

Residues 1-116 (MSWRGRSTYR…PEEGEKQSQC (116 aa)) form a disordered region. Acidic residues-rich tracts occupy residues 31–44 (FSDE…EEGE) and 86–95 (ECEDGPDGQE). Over residues 102–116 (EEVKTPEEGEKQSQC) the composition is skewed to basic and acidic residues.

It belongs to the GAGE family. In terms of tissue distribution, expressed in a variety of tumor tissues but not in normal tissues, except testis.

Its function is as follows. Antigen, recognized on melanoma by autologous cytolytic T-lymphocytes. This is G antigen 2B/2C (GAGE2B) from Homo sapiens (Human).